The chain runs to 693 residues: Kinesin-like protein KIFC1 (693 aa).

Disordered stretches follow at residues 1–24 (MRGR…VRTT) and 48–156 (VKSS…KRPA). Low complexity-rich tracts occupy residues 49–59 (KSSSRLPLPGS) and 127–138 (QKPAPAAPAQKP). A phosphoserine mark is found at Ser52 and Ser59. Residues 165 to 334 (DLHEELKQYR…QELKGNIRVF (170 aa)) adopt a coiled-coil conformation. Residues 330–683 (NIRVFCRVRP…LRFASKVNQC (354 aa)) form the Kinesin motor domain. Residue Thr379 is modified to Phosphothreonine. Position 430–437 (430–437 (GQTGSGKT)) interacts with ATP.

The protein belongs to the TRAFAC class myosin-kinesin ATPase superfamily. Kinesin family. NCD subfamily. In terms of assembly, binds NUBP1 and NUBP2. Interacts with PPP1R42.

It is found in the nucleus. The protein localises to the cytoplasm. Its subcellular location is the cytoskeleton. It localises to the microtubule organizing center. The protein resides in the centrosome. It is found in the spindle. The protein localises to the early endosome. Its function is as follows. Minus end-directed microtubule-dependent motor required for bipolar spindle formation. May contribute to movement of early endocytic vesicles. Regulates cilium formation and structure. The chain is Kinesin-like protein KIFC1 from Rattus norvegicus (Rat).